Here is a 358-residue protein sequence, read N- to C-terminus: Metacaspase-3 (358 aa).

The segment at 1 to 84 is important for catalytic activity; the sequence is MGFDFGCLLK…APTHVSGTFR (84 aa). Residues histidine 168 and cysteine 223 contribute to the active site.

It belongs to the peptidase C14B family. In epimastigotes, the unprocessed enzyme appears to be the main form. Auto-processing is dispensable for catalytic activity towards small oligopeptide substrates.

It localises to the cytoplasm. The protein localises to the nucleus. With respect to regulation, activated by Ca(2+). In terms of biological role, cysteine protease that cleaves specifically after arginine or lysine residues. In epimastigotes, may play a role in cell cycle G1/S transition. The chain is Metacaspase-3 from Trypanosoma cruzi (strain CL Brener).